Consider the following 69-residue polypeptide: ATP synthase F(0) complex subunit e, mitochondrial (69 aa).

Lysine 34 is modified (N6-acetyllysine).

This sequence belongs to the ATPase e subunit family. In terms of assembly, component of the ATP synthase complex composed at least of ATP5F1A/subunit alpha, ATP5F1B/subunit beta, ATP5MC1/subunit c (homooctomer), MT-ATP6/subunit a, MT-ATP8/subunit 8, ATP5ME/subunit e, ATP5MF/subunit f, ATP5MG/subunit g, ATP5MK/subunit k, ATP5MJ/subunit j, ATP5F1C/subunit gamma, ATP5F1D/subunit delta, ATP5F1E/subunit epsilon, ATP5PF/subunit F6, ATP5PB/subunit b, ATP5PD/subunit d, ATP5PO/subunit OSCP. ATP synthase complex consists of a soluble F(1) head domain (subunits alpha(3) and beta(3)) - the catalytic core - and a membrane F(0) domain - the membrane proton channel (subunits c, a, 8, e, f, g, k and j). These two domains are linked by a central stalk (subunits gamma, delta, and epsilon) rotating inside the F1 region and a stationary peripheral stalk (subunits F6, b, d, and OSCP).

Its subcellular location is the mitochondrion. It localises to the mitochondrion inner membrane. Its function is as follows. Subunit e, of the mitochondrial membrane ATP synthase complex (F(1)F(0) ATP synthase or Complex V) that produces ATP from ADP in the presence of a proton gradient across the membrane which is generated by electron transport complexes of the respiratory chain. ATP synthase complex consist of a soluble F(1) head domain - the catalytic core - and a membrane F(1) domain - the membrane proton channel. These two domains are linked by a central stalk rotating inside the F(1) region and a stationary peripheral stalk. During catalysis, ATP synthesis in the catalytic domain of F(1) is coupled via a rotary mechanism of the central stalk subunits to proton translocation. In vivo, can only synthesize ATP although its ATP hydrolase activity can be activated artificially in vitro. Part of the complex F(0) domain. The sequence is that of ATP synthase F(0) complex subunit e, mitochondrial from Cricetulus longicaudatus (Long-tailed dwarf hamster).